Consider the following 82-residue polypeptide: uncharacterized protein (82 aa).

Its subcellular location is the plastid. The protein resides in the chloroplast. This is an uncharacterized protein from Vicia faba (Broad bean).